The chain runs to 484 residues: Chromosomal replication initiator protein DnaA (484 aa).

A domain I, interacts with DnaA modulators region spans residues 1–73 (MQEGKNIWSL…EILIEKGHST (73 aa)). The segment at 73 to 140 (TINVEFIHSQ…EEIHIKYRNP (68 aa)) is domain II. A domain III, AAA+ region region spans residues 141–357 (FLKKKYTFEN…AAVTKLKAHI (217 aa)). Residues Gly185, Gly187, Lys188, and Thr189 each contribute to the ATP site. Residues 358-484 (DLEDIEIDTN…IELMNKINKN (127 aa)) are domain IV, binds dsDNA.

The protein belongs to the DnaA family. In terms of assembly, oligomerizes as a right-handed, spiral filament on DNA at oriC.

The protein localises to the cytoplasm. Its function is as follows. Plays an essential role in the initiation and regulation of chromosomal replication. ATP-DnaA binds to the origin of replication (oriC) to initiate formation of the DNA replication initiation complex once per cell cycle. Binds the DnaA box (a 9 base pair repeat at the origin) and separates the double-stranded (ds)DNA. Forms a right-handed helical filament on oriC DNA; dsDNA binds to the exterior of the filament while single-stranded (ss)DNA is stabiized in the filament's interior. The ATP-DnaA-oriC complex binds and stabilizes one strand of the AT-rich DNA unwinding element (DUE), permitting loading of DNA polymerase. After initiation quickly degrades to an ADP-DnaA complex that is not apt for DNA replication. Binds acidic phospholipids. This chain is Chromosomal replication initiator protein DnaA, found in Borrelia recurrentis (strain A1).